Consider the following 284-residue polypeptide: Rubber cis-polyprenyltransferase HRT2 (284 aa).

Asp-41 is a catalytic residue.

This sequence belongs to the UPP synthase family. In terms of tissue distribution, predominantly expressed in latex.

The catalysed reaction is (cis-prenyl)(n)-diphosphate + isopentenyl diphosphate = (cis-prenyl)(n+1)-diphosphate + diphosphate. Proposed to be involved in rubber biosynthesis as a particle-bound rubber transferase responsible for the cis-1,4-polymerization of isoprene subunits. Probably requires additional factors for the production of high molecular mass rubber. The sequence is that of Rubber cis-polyprenyltransferase HRT2 (HRT2) from Hevea brasiliensis (Para rubber tree).